The chain runs to 600 residues: 1-deoxy-D-xylulose-5-phosphate synthase (600 aa).

Residues His57 and 98–100 (GHA) each bind thiamine diphosphate. Asp125 serves as a coordination point for Mg(2+). Thiamine diphosphate-binding positions include 126-127 (AS), Asn155, Tyr264, and Glu343. Asn155 is a Mg(2+) binding site.

It belongs to the transketolase family. DXPS subfamily. In terms of assembly, homodimer. Mg(2+) is required as a cofactor. The cofactor is thiamine diphosphate.

It catalyses the reaction D-glyceraldehyde 3-phosphate + pyruvate + H(+) = 1-deoxy-D-xylulose 5-phosphate + CO2. It functions in the pathway metabolic intermediate biosynthesis; 1-deoxy-D-xylulose 5-phosphate biosynthesis; 1-deoxy-D-xylulose 5-phosphate from D-glyceraldehyde 3-phosphate and pyruvate: step 1/1. Functionally, catalyzes the acyloin condensation reaction between C atoms 2 and 3 of pyruvate and glyceraldehyde 3-phosphate to yield 1-deoxy-D-xylulose-5-phosphate (DXP). The polypeptide is 1-deoxy-D-xylulose-5-phosphate synthase (Fusobacterium nucleatum subsp. nucleatum (strain ATCC 25586 / DSM 15643 / BCRC 10681 / CIP 101130 / JCM 8532 / KCTC 2640 / LMG 13131 / VPI 4355)).